An 835-amino-acid chain; its full sequence is Phosphatidylinositol 4-kinase beta (835 aa).

Disordered stretches follow at residues 1 to 61 (MGDT…PLDV), 99 to 139 (SSAS…VRRR), and 267 to 341 (PSSQ…PVRL). Residues 19–59 (SPSTSTTSSLSLPSSPSSGPHPLTSSSPSTSEGLPTSSPPL) show a composition bias toward low complexity. One can recognise a PIK helical domain in the interval 59–262 (LDVISEGLGE…GTKLRKLILS (204 aa)). 2 stretches are compositionally biased toward basic and acidic residues: residues 125-134 (ISEEEVEPIK) and 267-276 (PSSQRIRREV). A compositionally biased stretch (pro residues) spans 277-288 (PQPPPPYPPPLH). The span at 311–332 (DATVSISLSSNLKRTASNPKVE) shows a compositional bias: polar residues. The PI3K/PI4K catalytic domain maps to 554–820 (EPWQEKVRRI…MVDGSMRSIT (267 aa)). Residues 560–566 (VRRIREG) form a G-loop region. The tract at residues 687-695 (QVKDRHNGN) is catalytic loop. The interval 706–730 (HIDFGFILSSSPRNLGFETSAFKLT) is activation loop.

It belongs to the PI3/PI4-kinase family. Type III PI4K subfamily. Mg(2+) serves as cofactor. It depends on Mn(2+) as a cofactor. Expressed in the inner ear otic vesicles.

The protein localises to the endomembrane system. The protein resides in the mitochondrion outer membrane. It is found in the rough endoplasmic reticulum membrane. The catalysed reaction is a 1,2-diacyl-sn-glycero-3-phospho-(1D-myo-inositol) + ATP = a 1,2-diacyl-sn-glycero-3-phospho-(1D-myo-inositol 4-phosphate) + ADP + H(+). Phosphorylates phosphatidylinositol (PI) in the first committed step in the production of the second messenger inositol-1,4,5,-trisphosphate (PIP). May play an important role the in inner ear development. This is Phosphatidylinositol 4-kinase beta (pi4kb) from Danio rerio (Zebrafish).